The primary structure comprises 89 residues: Exodeoxyribonuclease 7 small subunit (89 aa).

It belongs to the XseB family. As to quaternary structure, heterooligomer composed of large and small subunits.

Its subcellular location is the cytoplasm. It carries out the reaction Exonucleolytic cleavage in either 5'- to 3'- or 3'- to 5'-direction to yield nucleoside 5'-phosphates.. Bidirectionally degrades single-stranded DNA into large acid-insoluble oligonucleotides, which are then degraded further into small acid-soluble oligonucleotides. The polypeptide is Exodeoxyribonuclease 7 small subunit (Chlorobium phaeobacteroides (strain DSM 266 / SMG 266 / 2430)).